The chain runs to 780 residues: MERMARVTTALTGRTMFCHLDAPANAISVCRDAAQVVVAGRNIFKIYSMEEDHFVEKLNLRVGRKPSLNFSCADVVWHQMDDNLLATAATNGVVVTWNLGKPSRNKQDQLFTEHKRTVNKVCFHPTEVYMLLSGSQDGYMKCFDLRKKDSVSTFSGQSESVRDVQFSIRDYFTFAATFENGNVQLWDIRRPDRCERMFTAHNGPVFCCDWHPEDRGWLATGGRDKMVKVWDMNTNRAKEIYCVQTIASVARVKWRPERKYHIGTCSMMVDHNIYVWDVRRPFIPFATFEEHKDVTTGIIWRHMHDPSFLLSGSKDSTLYQHIFRDARRPIDRANPEGLCYGLFGDLAFAAKESLISSSSSHDSNRKPYDRRHPIFFLRRPDPTEQFENISSGLSVFEAGGGDMGWFVATAERYALAGRPLAELCDHNANVARDLNRWQVAQTWTMLRIIYCSPGTVPPANPNHSLGKSGTSLPLLNSFNLKELPSGIVGESRLEHSKGDSRADSILMDPAAINNDENEETEGSDVPADYLLGDVEGDEDELYMMDQEQPHTEEQEYVLPQEGFPLRHEIMDNPSALDHLQEKADSPHVSGNEAETVSLTPVESFSLISISHALYENRLPSDFFSPTVRDMLCFYAEQGDVQMAASVLIVLGDRIRKEIDEQTQEHWFTSYIDLLQRFKLWNVSNQVIKLSTCSSINCLNQASTTLHVNCSNCKRPMSNKGWICDRCRQCASMCAVCHHVVKGLFVWCQGCCHGGHLQHIMNWMQNNCYCPAGCGHVCEYS.

6 WD repeats span residues 67 to 107 (SLNF…RNKQ), 113 to 153 (EHKR…SVST), 156 to 196 (GQSE…RCER), 200 to 240 (AHNG…AKEI), 244 to 286 (QTIA…IPFA), and 290 to 333 (EHKD…IDRA). Residues 708-730 (NCSNCKRPMSNKGWICDRCRQCA) form a C4-type zinc finger. The Zn(2+) site is built by Cys-709, Cys-712, Cys-723, Cys-726, Cys-733, Cys-736, Cys-747, Cys-750, His-752, His-755, His-758, Cys-769, Cys-773, His-775, and Cys-777. An RING-type; atypical zinc finger spans residues 731–780 (SMCAVCHHVVKGLFVWCQGCCHGGHLQHIMNWMQNNCYCPAGCGHVCEYS).

Belongs to the WD repeat WDR24 family. In terms of assembly, component of the GATOR2 subcomplex, composed of MIOS, SEC13, SEH1L, WDR24 and WDR59. The GATOR2 complex interacts with CASTOR1 and CASTOR2; the interaction is negatively regulated by arginine. The GATOR2 complex interacts with SESN1, SESN2 and SESN3; the interaction is negatively regulated by amino acids.

The protein resides in the lysosome membrane. The catalysed reaction is S-ubiquitinyl-[E2 ubiquitin-conjugating enzyme]-L-cysteine + [acceptor protein]-L-lysine = [E2 ubiquitin-conjugating enzyme]-L-cysteine + N(6)-ubiquitinyl-[acceptor protein]-L-lysine.. It participates in protein modification; protein ubiquitination. Its activity is regulated as follows. The GATOR2 complex is negatively regulated by the upstream amino acid sensors CASTOR1 and SESN2, which sequester the GATOR2 complex in absence of amino acids. In the presence of abundant amino acids, GATOR2 is released from CASTOR1 and SESN2 and activated. Its function is as follows. Catalytic component of the GATOR2 complex, a multiprotein complex that acts as an activator of the amino acid-sensing branch of the mTORC1 signaling pathway. The GATOR2 complex indirectly activates mTORC1 through the inhibition of the GATOR1 subcomplex. GATOR2 probably acts as an E3 ubiquitin-protein ligase toward GATOR1. In the presence of abundant amino acids, the GATOR2 complex mediates ubiquitination of the NPRL2 core component of the GATOR1 complex, leading to GATOR1 inactivation. In the absence of amino acids, GATOR2 is inhibited, activating the GATOR1 complex. In addition to its role in regulation of the mTORC1 complex, promotes the acidification of lysosomes and facilitates autophagic flux. Within the GATOR2 complex, WDR24 constitutes the catalytic subunit that mediates 'Lys-6'-linked ubiquitination of NPRL2. This Xenopus laevis (African clawed frog) protein is GATOR2 complex protein WDR24.